We begin with the raw amino-acid sequence, 628 residues long: RING finger protein 112 (628 aa).

Residues 57-98 (CSICLERPREPISLDCGHDFCPRCFSTHRVPGCGPPCCPECR) form an RING-type zinc finger. An interaction with ZBTB16 region spans residues 132–628 (AVRAEPLLLV…GDREPLLQEE (497 aa)). The GB1/RHD3-type G domain occupies 167–409 (DTPVCLLAVL…RCPGYWSEGR (243 aa)). Position 318 to 319 (318 to 319 (RD)) interacts with GTP. The next 2 membrane-spanning stretches (helical) occupy residues 544–564 (LAAV…GVVG) and 577–597 (GMVA…GGGV).

This sequence belongs to the TRAFAC class dynamin-like GTPase superfamily. GB1/RHD3 GTPase family. GB1 subfamily. Self-associates. Interacts with SP1 in an oxidative stress-regulated manner. Interacts with SIGMAR1 in an oxidative stress-regulated manner. Interacts with ZBTB16 (via C2H2-type zinc finger domains 1 and 2). In terms of processing, auto-ubiquitinated.

The protein localises to the membrane. Its subcellular location is the cytoplasm. The protein resides in the nucleus. It is found in the nuclear body. It localises to the nucleoplasm. The protein localises to the endosome. Its subcellular location is the cytoplasmic vesicle. The protein resides in the secretory vesicle. It is found in the synaptic vesicle. It localises to the postsynaptic density. The protein localises to the perikaryon. Its subcellular location is the cell projection. The protein resides in the neuron projection. The catalysed reaction is S-ubiquitinyl-[E2 ubiquitin-conjugating enzyme]-L-cysteine + [acceptor protein]-L-lysine = [E2 ubiquitin-conjugating enzyme]-L-cysteine + N(6)-ubiquitinyl-[acceptor protein]-L-lysine.. The protein operates within protein modification; protein ubiquitination. Functionally, E3 ubiquitin-protein ligase that plays an important role in neuronal differentiation, including neurogenesis and gliogenesis, during brain development. During embryonic development initiates neuronal differentiation by inducing cell cycle arrest at the G0/G1 phase through up-regulation of cell-cycle regulatory proteins. Plays a role not only in the fetal period during the development of the nervous system, but also in the adult brain, where it is involved in the maintenance of neural functions and protection of the nervous tissue cells from oxidative stress-induced damage. Exhibits GTPase and E3 ubiquitin-protein ligase activities. Regulates dendritic spine density and synaptic neurotransmission; its ability to hydrolyze GTP is involved in the maintenance of dendritic spine density. This is RING finger protein 112 (RNF112) from Bos taurus (Bovine).